The chain runs to 195 residues: MEKFTIHTGTAVPLRLSNVDTDQIIPAVHLKRVTRTGFADALFSSWREDQAFVLNDESYSGASILVAGPEFGTGSSREHAVWALRDWGFRVVIAPRFGDIFRGNALKGGLLPVELELKAIEEIWGRIEADPSTSITVDLAARQVQVGGVNWGFPLDEFSRWRLMEGLDDIGLTLRHEPLIGAFEASRQPFLPTIA.

It belongs to the LeuD family. LeuD type 1 subfamily. Heterodimer of LeuC and LeuD.

It catalyses the reaction (2R,3S)-3-isopropylmalate = (2S)-2-isopropylmalate. It participates in amino-acid biosynthesis; L-leucine biosynthesis; L-leucine from 3-methyl-2-oxobutanoate: step 2/4. Its function is as follows. Catalyzes the isomerization between 2-isopropylmalate and 3-isopropylmalate, via the formation of 2-isopropylmaleate. The sequence is that of 3-isopropylmalate dehydratase small subunit from Salinispora tropica (strain ATCC BAA-916 / DSM 44818 / JCM 13857 / NBRC 105044 / CNB-440).